Consider the following 109-residue polypeptide: MSAQPVDIQVFGRSLRVNCPPEQQDALNMAAEDLSQRLQDLKVRTRVNNTEQLVFIAALNVCHELAQERLKTRDYASNMEQRIRMLQQTIEQALLEQGRISDRQDTQFE.

The stretch at 22 to 99 forms a coiled coil; the sequence is EQQDALNMAA…IEQALLEQGR (78 aa).

This sequence belongs to the ZapA family. Type 1 subfamily. Homodimer. Interacts with FtsZ.

It is found in the cytoplasm. Activator of cell division through the inhibition of FtsZ GTPase activity, therefore promoting FtsZ assembly into bundles of protofilaments necessary for the formation of the division Z ring. It is recruited early at mid-cell but it is not essential for cell division. The polypeptide is Cell division protein ZapA (Yersinia pseudotuberculosis serotype O:1b (strain IP 31758)).